A 159-amino-acid chain; its full sequence is Small ribosomal subunit protein uS4 (159 aa).

One can recognise an S4 RNA-binding domain in the interval 106–158 (RRLQTIVYRKGLAKSIYHARQLVVHGHVAVAGRRVTSPGFLVPRDLEDKITLI).

It belongs to the universal ribosomal protein uS4 family. As to quaternary structure, part of the 30S ribosomal subunit. Contacts protein S5. The interaction surface between S4 and S5 is involved in control of translational fidelity.

Its function is as follows. One of the primary rRNA binding proteins, it binds directly to 16S rRNA where it nucleates assembly of the body of the 30S subunit. In terms of biological role, with S5 and S12 plays an important role in translational accuracy. In Pyrobaculum islandicum (strain DSM 4184 / JCM 9189 / GEO3), this protein is Small ribosomal subunit protein uS4.